The following is a 425-amino-acid chain: Glutamate-1-semialdehyde 2,1-aminomutase (425 aa).

Lys265 is subject to N6-(pyridoxal phosphate)lysine.

This sequence belongs to the class-III pyridoxal-phosphate-dependent aminotransferase family. HemL subfamily. As to quaternary structure, homodimer. Pyridoxal 5'-phosphate serves as cofactor.

It is found in the cytoplasm. The enzyme catalyses (S)-4-amino-5-oxopentanoate = 5-aminolevulinate. It functions in the pathway porphyrin-containing compound metabolism; protoporphyrin-IX biosynthesis; 5-aminolevulinate from L-glutamyl-tRNA(Glu): step 2/2. The protein is Glutamate-1-semialdehyde 2,1-aminomutase of Clostridium perfringens (strain ATCC 13124 / DSM 756 / JCM 1290 / NCIMB 6125 / NCTC 8237 / Type A).